We begin with the raw amino-acid sequence, 569 residues long: Urease subunit alpha (569 aa).

Residues 131-569 enclose the Urease domain; the sequence is GGMDAHIHFI…LPMAQRYFLF (439 aa). 3 residues coordinate Ni(2+): His-136, His-138, and Lys-218. At Lys-218 the chain carries N6-carboxylysine. His-220 provides a ligand contact to substrate. Ni(2+)-binding residues include His-247 and His-273. Catalysis depends on His-321, which acts as the Proton donor. Residue Asp-361 participates in Ni(2+) binding.

Belongs to the metallo-dependent hydrolases superfamily. Urease alpha subunit family. In terms of assembly, heterotrimer of UreA (gamma), UreB (beta) and UreC (alpha) subunits. Three heterotrimers associate to form the active enzyme. Requires Ni cation as cofactor. Post-translationally, carboxylation allows a single lysine to coordinate two nickel ions.

The protein resides in the cytoplasm. The enzyme catalyses urea + 2 H2O + H(+) = hydrogencarbonate + 2 NH4(+). The protein operates within nitrogen metabolism; urea degradation; CO(2) and NH(3) from urea (urease route): step 1/1. The protein is Urease subunit alpha of Rhizobium rhizogenes (strain K84 / ATCC BAA-868) (Agrobacterium radiobacter).